Reading from the N-terminus, the 84-residue chain is MSDKIRTQLGRVVSDKMDKSIVVAIERMVKHPIYGKFVKRTTKVHAHDENNECGIGDTVEIRECRPLSKTKSWTLVKVVEKAKI.

This sequence belongs to the universal ribosomal protein uS17 family. In terms of assembly, part of the 30S ribosomal subunit.

Functionally, one of the primary rRNA binding proteins, it binds specifically to the 5'-end of 16S ribosomal RNA. This chain is Small ribosomal subunit protein uS17, found in Vibrio vulnificus (strain CMCP6).